A 343-amino-acid polypeptide reads, in one-letter code: Probable dual-specificity RNA methyltransferase RlmN (343 aa).

The active-site Proton acceptor is the glutamate 93. The Radical SAM core domain occupies threonine 99–arginine 320. A disulfide bridge links cysteine 106 with cysteine 331. [4Fe-4S] cluster is bound by residues cysteine 113, cysteine 117, and cysteine 120. Residues glycine 158 to glutamate 159, serine 190, serine 212 to histidine 214, and histidine 288 contribute to the S-adenosyl-L-methionine site. The active-site S-methylcysteine intermediate is cysteine 331.

The protein belongs to the radical SAM superfamily. RlmN family. It depends on [4Fe-4S] cluster as a cofactor.

It is found in the cytoplasm. The enzyme catalyses adenosine(2503) in 23S rRNA + 2 reduced [2Fe-2S]-[ferredoxin] + 2 S-adenosyl-L-methionine = 2-methyladenosine(2503) in 23S rRNA + 5'-deoxyadenosine + L-methionine + 2 oxidized [2Fe-2S]-[ferredoxin] + S-adenosyl-L-homocysteine. It carries out the reaction adenosine(37) in tRNA + 2 reduced [2Fe-2S]-[ferredoxin] + 2 S-adenosyl-L-methionine = 2-methyladenosine(37) in tRNA + 5'-deoxyadenosine + L-methionine + 2 oxidized [2Fe-2S]-[ferredoxin] + S-adenosyl-L-homocysteine. Functionally, specifically methylates position 2 of adenine 2503 in 23S rRNA and position 2 of adenine 37 in tRNAs. The polypeptide is Probable dual-specificity RNA methyltransferase RlmN (Parabacteroides distasonis (strain ATCC 8503 / DSM 20701 / CIP 104284 / JCM 5825 / NCTC 11152)).